We begin with the raw amino-acid sequence, 278 residues long: Diaminopimelate epimerase (278 aa).

Residues asparagine 11 and asparagine 75 each contribute to the substrate site. The active-site Proton donor is the cysteine 84. Residues 85–86 (GN), asparagine 160, asparagine 195, and 213–214 (ER) contribute to the substrate site. Catalysis depends on cysteine 222, which acts as the Proton acceptor. Position 223–224 (223–224 (GT)) interacts with substrate.

This sequence belongs to the diaminopimelate epimerase family. Homodimer.

It is found in the cytoplasm. It carries out the reaction (2S,6S)-2,6-diaminopimelate = meso-2,6-diaminopimelate. The protein operates within amino-acid biosynthesis; L-lysine biosynthesis via DAP pathway; DL-2,6-diaminopimelate from LL-2,6-diaminopimelate: step 1/1. Catalyzes the stereoinversion of LL-2,6-diaminopimelate (L,L-DAP) to meso-diaminopimelate (meso-DAP), a precursor of L-lysine and an essential component of the bacterial peptidoglycan. The chain is Diaminopimelate epimerase from Corynebacterium aurimucosum (strain ATCC 700975 / DSM 44827 / CIP 107346 / CN-1) (Corynebacterium nigricans).